The chain runs to 177 residues: Ribosome maturation factor RimP (177 aa).

A compositionally biased stretch (basic and acidic residues) spans 153–171; it reads VEFNRKDTKNDNQTEHDNK. Positions 153–177 are disordered; the sequence is VEFNRKDTKNDNQTEHDNKTEEEEA.

Belongs to the RimP family.

The protein resides in the cytoplasm. Functionally, required for maturation of 30S ribosomal subunits. The polypeptide is Ribosome maturation factor RimP (Streptomyces coelicolor (strain ATCC BAA-471 / A3(2) / M145)).